The primary structure comprises 335 residues: Methionine aminopeptidase 1D, mitochondrial (335 aa).

A mitochondrion-targeting transit peptide spans 1–19 (MAAPSGVHLLVRRGSHRIF). Histidine 161 contacts substrate. Residues aspartate 178, aspartate 189, and histidine 252 each contribute to the a divalent metal cation site. Position 259 (histidine 259) interacts with substrate. Residues glutamate 284 and glutamate 315 each coordinate a divalent metal cation.

This sequence belongs to the peptidase M24A family. Methionine aminopeptidase type 1 subfamily. The cofactor is Co(2+). Zn(2+) is required as a cofactor. It depends on Mn(2+) as a cofactor. Fe(2+) serves as cofactor. As to expression, overexpressed in colon cancer cell lines and colon tumors as compared to normal tissues (at protein level).

Its subcellular location is the mitochondrion. It catalyses the reaction Release of N-terminal amino acids, preferentially methionine, from peptides and arylamides.. Removes the N-terminal methionine from nascent proteins. The N-terminal methionine is often cleaved when the second residue in the primary sequence is small and uncharged (Met-Ala-, Cys, Gly, Pro, Ser, Thr, or Val). Requires deformylation of the N(alpha)-formylated initiator methionine before it can be hydrolyzed. May play a role in colon tumorigenesis. This is Methionine aminopeptidase 1D, mitochondrial (METAP1D) from Homo sapiens (Human).